Reading from the N-terminus, the 212-residue chain is MTKGIFISFEGPDGAGKTTVLEAILPQLKKLVAKEVITTREPGGVAIAESIRDLILDVNHTNMDDKTELLLYIAARRQHLVERILPELKKGNLVLVDRFIDSSVAYQGYGRGLDADAVTWLNNFATDGLQPDLTLYFDVDSQIGLTRIEKNKEREVNRLDLEQLDMHRRVRSGYLKLAQENPDRIVTIDAARPLEEVITDALFIIKQRCLEK.

11–18 (GPDGAGKT) serves as a coordination point for ATP.

Belongs to the thymidylate kinase family.

It catalyses the reaction dTMP + ATP = dTDP + ADP. Its function is as follows. Phosphorylation of dTMP to form dTDP in both de novo and salvage pathways of dTTP synthesis. This chain is Thymidylate kinase, found in Streptococcus mutans serotype c (strain ATCC 700610 / UA159).